The primary structure comprises 267 residues: Putative ABC transporter permease protein MJ0413 (267 aa).

The next 7 helical transmembrane spans lie at 18–38, 48–68, 78–98, 115–135, 136–156, 188–208, and 228–248; these read VLKI…AIYI, EAVI…GSLI, VISG…LMGY, PIPP…GEMS, MIFI…ISGV, PSIL…VVAA, and LSRM…GLVL. Residues 71–252 form the ABC transmembrane type-1 domain; the sequence is TIISIKRVIS…LIGLVLDRGL (182 aa).

Belongs to the binding-protein-dependent transport system permease family. CysTW subfamily.

It localises to the cell membrane. Its function is as follows. Probably part of a binding-protein-dependent transport system. Probably responsible for the translocation of the substrate across the membrane. This is Putative ABC transporter permease protein MJ0413 from Methanocaldococcus jannaschii (strain ATCC 43067 / DSM 2661 / JAL-1 / JCM 10045 / NBRC 100440) (Methanococcus jannaschii).